The following is a 641-amino-acid chain: Transcriptional activator of proteases prtT (641 aa).

The zn(2)-C6 fungal-type DNA-binding region spans 52–81; that stretch reads CNTCRKLKTRCDLDPRGHACRRCLSLRIDC.

It belongs to the prtT family.

It is found in the nucleus. Transcription factor required for protein utilization and degradation. Regulates transcription of major secreted proteases including a serine alkaline protease (alp1) and a metalloprotease (NpI). In Aspergillus oryzae (strain ATCC 42149 / RIB 40) (Yellow koji mold), this protein is Transcriptional activator of proteases prtT (prtT).